The sequence spans 99 residues: Malonate decarboxylase acyl carrier protein (99 aa).

Residue Ser-25 is modified to O-(phosphoribosyl dephospho-coenzyme A)serine.

The protein belongs to the MdcC family. Post-translationally, covalently binds the prosthetic group of malonate decarboxylase.

Its subcellular location is the cytoplasm. In terms of biological role, subunit of malonate decarboxylase, it is an acyl carrier protein to which acetyl and malonyl thioester residues are bound via a 2'-(5''-phosphoribosyl)-3'-dephospho-CoA prosthetic group and turn over during the catalytic mechanism. In Pseudomonas aeruginosa (strain LESB58), this protein is Malonate decarboxylase acyl carrier protein.